The sequence spans 269 residues: MNRIHAVILDWAGTTVDFGSFAPTQIFVEAFRQAFDVEITLAEARVPMGLGKWQHIEALGKLPAVDARWQAKFGRAMSAADIDAIYAAFMPLQIAKVVDFSSPIAGVIDTIATLRAEGIKIGSCSGYPRAVMERLVPAAAGHGYCPDHWVATDDLAAGGRPGPWMALQNVIALGIDAVAHCVKVDDAAPGISEGLNAGMWTVGLAVSGNEFGATWDAYQTMSKEDVAVRREHAASKLYAAGAHYVVDSLADLPGVIAHINARLAQGERP.

D10 (nucleophile) is an active-site residue. Residues D10 and A12 each contribute to the Mg(2+) site. Residue K52 is the Schiff-base intermediate with substrate of the active site. D186 contacts Mg(2+).

It belongs to the HAD-like hydrolase superfamily. PhnX family. In terms of assembly, homodimer. The cofactor is Mg(2+).

It catalyses the reaction phosphonoacetaldehyde + H2O = acetaldehyde + phosphate + H(+). Its function is as follows. Involved in phosphonate degradation. The chain is Phosphonoacetaldehyde hydrolase from Salmonella paratyphi A (strain ATCC 9150 / SARB42).